Reading from the N-terminus, the 934-residue chain is DNA topoisomerase 1 (934 aa).

The tract at residues 1–20 (MADPKTKGRGSGGNGSGRRL) is disordered. A Toprim domain is found at 18-142 (RRLVIVESPT…VKRMVFHEIT (125 aa)). 2 residues coordinate Mg(2+): Glu-24 and Asp-111. A Topo IA-type catalytic domain is found at 157 to 616 (DIDLVDAQET…FYFGGDHGVP (460 aa)). The interval 191–196 (SAGRVQ) is interaction with DNA. The active-site O-(5'-phospho-DNA)-tyrosine intermediate is the Tyr-342. Disordered stretches follow at residues 746 to 765 (AAQGVKKRQKAAGPKPRTGS), 842 to 892 (KRRG…KGDD), and 905 to 934 (LADRRARGPAKRPARKAARKVPAKKAAKRD). Positions 911–934 (RGPAKRPARKAARKVPAKKAAKRD) are enriched in basic residues.

Belongs to the type IA topoisomerase family. As to quaternary structure, monomer. Mg(2+) is required as a cofactor.

The catalysed reaction is ATP-independent breakage of single-stranded DNA, followed by passage and rejoining.. Functionally, releases the supercoiling and torsional tension of DNA, which is introduced during the DNA replication and transcription, by transiently cleaving and rejoining one strand of the DNA duplex. Introduces a single-strand break via transesterification at a target site in duplex DNA. The scissile phosphodiester is attacked by the catalytic tyrosine of the enzyme, resulting in the formation of a DNA-(5'-phosphotyrosyl)-enzyme intermediate and the expulsion of a 3'-OH DNA strand. The free DNA strand then undergoes passage around the unbroken strand, thus removing DNA supercoils. Finally, in the religation step, the DNA 3'-OH attacks the covalent intermediate to expel the active-site tyrosine and restore the DNA phosphodiester backbone. In Mycobacterium bovis (strain ATCC BAA-935 / AF2122/97), this protein is DNA topoisomerase 1.